The sequence spans 20 residues: Endo-1,6-beta-glucanase (20 aa).

Belongs to the glycosyl hydrolase 5 (cellulase A) family.

It is found in the secreted. Its subcellular location is the extracellular space. It carries out the reaction Random hydrolysis of (1-&gt;6)-linkages in (1-&gt;6)-beta-D-glucans.. Functionally, endo-1,6-beta-glucanase that has highest activity against the beta-1,6-glucan pustulan. Also active against the beta-1,6-glucan lutean. Lower activity against laminarin (beta-1,3-glucan with beta-1,6-branches). Little or no activity against gentiobiose, yeast glucan, lichenin, scleroglucan, curdlan, barley glucan, CM cellulose, HE cellulose, pachyman and pullulan. This chain is Endo-1,6-beta-glucanase, found in Acremonium sp.